Consider the following 408-residue polypeptide: GTPase Obg (408 aa).

The Obg domain maps to 1–159 (MKFVDEVSIR…RDLKMEMKVL (159 aa)). The disordered stretch occupies residues 127 to 150 (NTRFKSSTNRAPRQTTPGKPGDQR). Over residues 129–143 (RFKSSTNRAPRQTTP) the composition is skewed to polar residues. Positions 160-333 (ADVGLLGLPN…LSHDLMRYLE (174 aa)) constitute an OBG-type G domain. Residues 166–173 (GLPNAGKS), 191–195 (FTTLV), 213–216 (DIPG), 283–286 (NKSD), and 314–316 (SAI) each bind GTP. Mg(2+) is bound by residues serine 173 and threonine 193. Positions 382–408 (HDIGDDDGWDDDFEDDEDGPEIIYVRD) are disordered. Positions 385 to 401 (GDDDGWDDDFEDDEDGP) are enriched in acidic residues.

Belongs to the TRAFAC class OBG-HflX-like GTPase superfamily. OBG GTPase family. In terms of assembly, monomer. Requires Mg(2+) as cofactor.

The protein resides in the cytoplasm. An essential GTPase which binds GTP, GDP and possibly (p)ppGpp with moderate affinity, with high nucleotide exchange rates and a fairly low GTP hydrolysis rate. Plays a role in control of the cell cycle, stress response, ribosome biogenesis and in those bacteria that undergo differentiation, in morphogenesis control. The chain is GTPase Obg from Pseudomonas putida (strain GB-1).